Reading from the N-terminus, the 79-residue chain is Small polypeptide DEVIL 8 (79 aa).

Polar residues predominate over residues 1–12 (MSRLRNSAQLQL). Residues 1 to 37 (MSRLRNSAQLQLSKKESLGDNGGALNTTRSSRQKQGK) form a disordered region. A glycan (N-linked (GlcNAc...) asparagine) is linked at asparagine 26. The segment at 39 to 70 (GFTRKCGRLVKEQRARFYIMRRCVVMLICWTD) is required for DVL/RTFL small polypeptide activity. The chain crosses the membrane as a helical span at residues 55–71 (FYIMRRCVVMLICWTDH). Asparagine 74 carries an N-linked (GlcNAc...) asparagine glycan.

It belongs to the DVL/RTFL small polypeptides family.

Its subcellular location is the cell membrane. Its function is as follows. Small polypeptide acting as a regulatory molecule which coordinates cellular responses required for differentiation, growth and development, probably by restricting polar cell proliferation in lateral organs and coordinating socket cell recruitment and differentiation at trichome sites. This chain is Small polypeptide DEVIL 8, found in Arabidopsis thaliana (Mouse-ear cress).